The following is a 237-amino-acid chain: Platelet-aggregating proteinase PA-BJ (237 aa).

Positions 1–5 (NSLVI) are excised as a propeptide. Positions 6-229 (VVGGRPCKIN…YLPWIESIIA (224 aa)) constitute a Peptidase S1 domain. Intrachain disulfides connect Cys12–Cys144, Cys31–Cys47, Cys79–Cys236, Cys123–Cys191, Cys155–Cys170, and Cys181–Cys205. An N-linked (GlcNAc...) asparagine glycan is attached at Asn25. Ser28 carries O-linked (GalNAc...) serine glycosylation. Catalysis depends on charge relay system residues His46 and Asp91. Ser185 (charge relay system) is an active-site residue.

Belongs to the peptidase S1 family. Snake venom subfamily. In terms of assembly, monomer. Expressed by the venom gland.

The protein localises to the secreted. Inhibited by PMSF. The amidolytic activity is also inhibited by benzamidine derivatives. Its function is as follows. Snake venom serine protease that induces platelet aggregation through activation of protease-activated platelet receptors (PAR1/F2R and PAR4/F2RL3). On F2R, the cleavage occurs at Arg41-Ser42 (like thrombin cleavage), and Arg46-Asn47. In normal condition of hemostasis, the cleavage of the Arg41-Ser42 bond liberates a new N-terminus that functions as an agonist. However after envenomation, the cleavage of Arg46-Asn47 bond degrades this potential agonist. This may explain why the snake protease is less potent than thrombin in causing platelet aggregation and release reaction. On F2RL3, a thrombin-like activity has also been proven by calcium release from lung fibroblasts transfected with this receptor. Possesses amidolytic activities. The chain is Platelet-aggregating proteinase PA-BJ from Bothrops jararaca (Jararaca).